A 777-amino-acid polypeptide reads, in one-letter code: Androgen receptor (777 aa).

The segment at 1 to 416 (MEVHIGLGGV…IDYYFPPQKP (416 aa)) is modulating. Disordered regions lie at residues 53 to 95 (CVHP…QAPQ), 110 to 132 (GEQG…YPES), and 205 to 241 (RRAG…LSEP). 2 consecutive NR C4-type zinc fingers follow at residues 417 to 434 (CLSC…ALTC) and 453 to 472 (CASR…CPSC). Positions 417 to 489 (CLSCEDEASG…AGMTLGARKL (73 aa)) form a DNA-binding region, nuclear receptor. The NR LBD domain maps to 526–757 (SCQPIFLNVL…DFPEMMSEII (232 aa)). 3 residues coordinate 17beta-hydroxy-5alpha-androstan-3-one: N563, R610, and T735.

Belongs to the nuclear hormone receptor family. NR3 subfamily. In terms of assembly, binds DNA as a homodimer. Interacts via the ligand-binding domain with LXXLL and FXXLF motifs from coactivator proteins. Interacts (via ligand-binding domain) with TRIM68. In terms of tissue distribution, detected in somatic Leydig and Sertoli cells in testis with high level expression. Also detected at lower expression levels in forebrain and heart.

Its subcellular location is the nucleus. The protein localises to the cytoplasm. Its function is as follows. Steroid hormone receptors are ligand-activated transcription factors that regulate eukaryotic gene expression and affect cellular proliferation and differentiation in target tissues. Transcription factor activity is modulated by bound coactivator and corepressor proteins. This chain is Androgen receptor (ar), found in Aquarana catesbeiana (American bullfrog).